Consider the following 170-residue polypeptide: Probable inosine/xanthosine triphosphatase (170 aa).

Residue Glu31 participates in Mg(2+) binding.

This sequence belongs to the YjjX NTPase family. As to quaternary structure, homodimer. It depends on Mg(2+) as a cofactor. The cofactor is Mn(2+).

It carries out the reaction XTP + H2O = XDP + phosphate + H(+). The enzyme catalyses ITP + H2O = IDP + phosphate + H(+). In terms of biological role, phosphatase that hydrolyzes non-canonical purine nucleotides such as XTP and ITP to their respective diphosphate derivatives. Probably excludes non-canonical purines from DNA/RNA precursor pool, thus preventing their incorporation into DNA/RNA and avoiding chromosomal lesions. In Oceanobacillus iheyensis (strain DSM 14371 / CIP 107618 / JCM 11309 / KCTC 3954 / HTE831), this protein is Probable inosine/xanthosine triphosphatase.